The following is a 304-amino-acid chain: Caspase-6 (304 aa).

A disordered region spans residues 1-29 (MSGAERRPAAGRVQLDSKPTPTTTADGNQ). A propeptide spanning residues 1–35 (MSGAERRPAAGRVQLDSKPTPTTTADGNQNITEVD) is cleaved from the precursor. The segment covering 17-29 (SKPTPTTTADGNQ) has biased composition (polar residues). A tri-arginine exosite region spans residues 54–56 (QRR). Residue H133 is part of the active site. Residues 137-154 (DHVYAYDAQIKIETITNM) are 130's region. Residue C175 is part of the active site. The propeptide occupies 192–204 (SKDETTVNQTEVD).

The protein belongs to the peptidase C14A family. In terms of assembly, heterotetramer that consists of two anti-parallel arranged heterodimers, each one formed by a 18 kDa (p18) and a 11 kDa (p11) subunit. Heterotetramer that consists of two anti-parallel arranged heterodimers, each one formed by a 18 kDa (Caspase-6 subunit p18) and a 11 kDa (Caspase-6 subunit p11) subunit. In terms of tissue distribution, widely expressed.

The protein resides in the cytoplasm. Its subcellular location is the nucleus. It carries out the reaction Strict requirement for Asp at position P1 and has a preferred cleavage sequence of Val-Glu-His-Asp-|-.. Its activity is regulated as follows. During activation, the N-terminal prodomain is removed by cleavage. Concomitantly, double cleavage gives rise to a large 18-kDa and a small 11-kDa subunit. The two large and two small subunits then assemble to form the active CASP6 complex. Intramolecular cleavage at Asp-191 is a prerequisite for CASP6 self-activation. Functionally, cysteine protease that plays essential roles in programmed cell death, development and innate immunity. Acts as a non-canonical executioner caspase during apoptosis: localizes in the nucleus and cleaves the nuclear structural protein lamin-A/LMNA thereby inducing nuclear shrinkage and fragmentation. Lamin-A/LMNA cleavage is required for chromatin condensation and nuclear disassembly during apoptotic execution. Plays an essential role in defense against viruses by acting as a central mediator of the ZBP1-mediated pyroptosis, apoptosis, and necroptosis (PANoptosis), independently of its cysteine protease activity. PANoptosis is a unique inflammatory programmed cell death, which provides a molecular scaffold that allows the interactions and activation of machinery required for inflammasome/pyroptosis, apoptosis and necroptosis. This chain is Caspase-6, found in Gallus gallus (Chicken).